The primary structure comprises 629 residues: tRNA uridine 5-carboxymethylaminomethyl modification enzyme MnmG (629 aa).

Residue 13 to 18 (GGGHAG) coordinates FAD. 273 to 287 (GPRYCPSIEDKVMRF) serves as a coordination point for NAD(+).

Belongs to the MnmG family. In terms of assembly, homodimer. Heterotetramer of two MnmE and two MnmG subunits. FAD is required as a cofactor.

The protein resides in the cytoplasm. NAD-binding protein involved in the addition of a carboxymethylaminomethyl (cmnm) group at the wobble position (U34) of certain tRNAs, forming tRNA-cmnm(5)s(2)U34. The protein is tRNA uridine 5-carboxymethylaminomethyl modification enzyme MnmG of Photorhabdus laumondii subsp. laumondii (strain DSM 15139 / CIP 105565 / TT01) (Photorhabdus luminescens subsp. laumondii).